Consider the following 460-residue polypeptide: UDP-N-acetylmuramoylalanine--D-glutamate ligase (460 aa).

120–126 provides a ligand contact to ATP; sequence GSNGKTT.

This sequence belongs to the MurCDEF family.

It is found in the cytoplasm. The catalysed reaction is UDP-N-acetyl-alpha-D-muramoyl-L-alanine + D-glutamate + ATP = UDP-N-acetyl-alpha-D-muramoyl-L-alanyl-D-glutamate + ADP + phosphate + H(+). Its pathway is cell wall biogenesis; peptidoglycan biosynthesis. Functionally, cell wall formation. Catalyzes the addition of glutamate to the nucleotide precursor UDP-N-acetylmuramoyl-L-alanine (UMA). In Lactobacillus delbrueckii subsp. bulgaricus (strain ATCC BAA-365 / Lb-18), this protein is UDP-N-acetylmuramoylalanine--D-glutamate ligase.